We begin with the raw amino-acid sequence, 159 residues long: UPF0336 protein MAP_4107 (159 aa).

It belongs to the UPF0336 family.

This is UPF0336 protein MAP_4107 from Mycolicibacterium paratuberculosis (strain ATCC BAA-968 / K-10) (Mycobacterium paratuberculosis).